The chain runs to 165 residues: Phosphopantetheine adenylyltransferase (165 aa).

A substrate-binding site is contributed by serine 9. Residues 9–10 and histidine 17 each bind ATP; that span reads SF. Residues lysine 41, isoleucine 75, and arginine 89 each contribute to the substrate site. ATP is bound by residues 90–92, glutamate 100, and 125–131; these read GVR and YLFVRSD.

It belongs to the bacterial CoaD family. In terms of assembly, homohexamer. Mg(2+) serves as cofactor.

It is found in the cytoplasm. The enzyme catalyses (R)-4'-phosphopantetheine + ATP + H(+) = 3'-dephospho-CoA + diphosphate. It participates in cofactor biosynthesis; coenzyme A biosynthesis; CoA from (R)-pantothenate: step 4/5. Its function is as follows. Reversibly transfers an adenylyl group from ATP to 4'-phosphopantetheine, yielding dephospho-CoA (dPCoA) and pyrophosphate. The polypeptide is Phosphopantetheine adenylyltransferase (Borrelia turicatae (strain 91E135)).